The following is a 329-amino-acid chain: Ribosomal RNA small subunit methyltransferase H (329 aa).

S-adenosyl-L-methionine is bound by residues 34–36 (GGY), Asp-52, Phe-79, Asp-100, and Gln-107. A disordered region spans residues 285-329 (GEDEVAHNPRARSAKLRAAERTSAPAHKDDQSSSWPRLSDVMRGG).

Belongs to the methyltransferase superfamily. RsmH family.

Its subcellular location is the cytoplasm. The catalysed reaction is cytidine(1402) in 16S rRNA + S-adenosyl-L-methionine = N(4)-methylcytidine(1402) in 16S rRNA + S-adenosyl-L-homocysteine + H(+). Its function is as follows. Specifically methylates the N4 position of cytidine in position 1402 (C1402) of 16S rRNA. The sequence is that of Ribosomal RNA small subunit methyltransferase H from Bradyrhizobium diazoefficiens (strain JCM 10833 / BCRC 13528 / IAM 13628 / NBRC 14792 / USDA 110).